The chain runs to 206 residues: Ribosomal RNA small subunit methyltransferase G (206 aa).

Residues G73, L78, 124–125, and R139 contribute to the S-adenosyl-L-methionine site; that span reads VE.

The protein belongs to the methyltransferase superfamily. RNA methyltransferase RsmG family.

The protein localises to the cytoplasm. The enzyme catalyses guanosine(527) in 16S rRNA + S-adenosyl-L-methionine = N(7)-methylguanosine(527) in 16S rRNA + S-adenosyl-L-homocysteine. Its function is as follows. Specifically methylates the N7 position of guanine in position 527 of 16S rRNA. The polypeptide is Ribosomal RNA small subunit methyltransferase G (Yersinia pseudotuberculosis serotype O:1b (strain IP 31758)).